The following is a 99-amino-acid chain: Integration host factor subunit beta (99 aa).

Belongs to the bacterial histone-like protein family. In terms of assembly, heterodimer of an alpha and a beta chain.

In terms of biological role, this protein is one of the two subunits of integration host factor, a specific DNA-binding protein that functions in genetic recombination as well as in transcriptional and translational control. In Rhizobium etli (strain CIAT 652), this protein is Integration host factor subunit beta.